A 943-amino-acid polypeptide reads, in one-letter code: MIPTLLLGFGVYLSWGLLGSWAQDPGTKFSHLNRPGMPEGWRLGAEDTSRDPIRRNWCPYQKSRLVTFVAACKTEKFLVHSQQPCPQGAPDCQGVRVMYRVAQKPVYQVQQKVLISVDWRCCPGFQGPDCQDHNPTANPEPTEPSGKLQETWDSMDGFELGHPVPEFNEIKVPQEQQENLLQNLQNDAQSVEDGFPGSWEAPPSNLTDEMTEANLTEFEFPGRTSEHLLQPHIDAFLKAHFSPIWKNFNDSLHSLSQAIRNLSLDVEANHQAIKMIQEGTVARADFQELGAKFEAKVQQNSQRLGQLWQDVEDQLHAQRRSVHHALSDVQAEVSTKLKQLVKAQELPGANGSLVMASAAAAARPEPESLQARLGQLQRNLSALHMVTSQREEELQSTLKNMDSVLKQHAEEIKELYSESDETFDQISKVERQVEELLVNHTGLRELRVILMEKSLIMEENKEEIERQLLELNLTLQHLHAGHADLIKYVKDCNCQRVNSDVDVAPEGHRDVMHTLEETQVSLDEQHQLDGSSLQALQSTVDAMSSAMDAYRGEGERARAERARIRSQLRALDHAVEALKTAANGTRKEIRLLHGSFTALLEDALRHQAVLAALFGEEMIDEMSEEAPRPLPLDYEQIRLALQDAASGLQEQAIGWEDLATRVEALEKAAGGFVEQHPQLAEGLEPSHDSGREEEAMTLAELEQEIRRLSSDVKQIGQCCEASWAASLNSSLEDLHSMLLDTQHGLRQHRQLFHNLFQNFQGLVASNISLDLGKLQAMLSKKDKKQPRGPGESRKRDKKQVVMSTDAHAKGLELWETGSPVAFYAGSSEGATALQMVKFNTTSINVGSSYFPEHGYFRAPKRGVYLFAVSITFGPGPGMGQLVFEGHHRVPVYSTEQRGGSTATTFAMVELQKGERAWFELIQGSATKGSQPGTAFGGFLMFKT.

Positions 1-22 (MIPTLLLGFGVYLSWGLLGSWA) are cleaved as a signal peptide. Residues 54–132 (RRNWCPYQKS…PGFQGPDCQD (79 aa)) enclose the EMI domain. 3 cysteine pairs are disulfide-bonded: C58–C122, C85–C92, and C121–C130. S63 carries an O-linked (Fuc...) serine glycan. O-linked (Fuc) threonine glycosylation is present at T67. A disordered region spans residues 128 to 150 (PDCQDHNPTANPEPTEPSGKLQE). N-linked (GlcNAc...) asparagine glycans are attached at residues N205, N214, N249, N261, N350, N379, N439, and N472. 2 coiled-coil regions span residues 391–480 (EEEL…HLHA) and 551–580 (RGEG…ALKT). Residue N583 is glycosylated (N-linked (GlcNAc...) asparagine). The stretch at 688-720 (DSGREEEAMTLAELEQEIRRLSSDVKQIGQCCE) forms a coiled coil. 2 N-linked (GlcNAc...) asparagine glycosylation sites follow: N728 and N766. The disordered stretch occupies residues 778-801 (LSKKDKKQPRGPGESRKRDKKQVV). The C1q domain occupies 815-943 (ETGSPVAFYA…AFGGFLMFKT (129 aa)). N-linked (GlcNAc...) asparagine glycosylation occurs at N839.

As to quaternary structure, heteromer of p110, p125, p140 and p200 subunits; disulfide-linked. Interacts with VEGFA. Interacts with CD93; this interaction promotes angiogenesis. Interacts with CD248. In terms of processing, N- and O-glycosylated. Processed by matrix metalloproteinases (MMPs) including MMP9 and, to a lesser degree, by MMP2 upon angiogenic stimulation. Post-translationally, O-fucosylated within the EMI domain (at Ser-63 and Thr-67) by FUT10/POFUT3 and FUT11/POFUT4.

Its subcellular location is the secreted. The protein resides in the extracellular space. The protein localises to the extracellular matrix. Extracellular matrix protein that plays significant roles in the vascular system and is required for the maintenance and stability of blood vessel. Affects several essential steps in angiogenesis including endothelial cell proliferation, migration, and tube formation. Positively regulates angiogenesis by acting as a ligand for CD93 receptor. This Mus musculus (Mouse) protein is Multimerin-2.